Reading from the N-terminus, the 433-residue chain is C4-dicarboxylate transport protein (433 aa).

The next 8 helical transmembrane spans lie at 8-28 (ILYV…HFWP), 44-64 (LIKM…IAGM), 78-98 (LLYF…AAHL), 148-168 (GDIL…AVLG), 188-208 (IVHV…AFTI), 222-242 (LIGT…GTIA), 307-327 (IYMT…LTLM), and 355-375 (AATL…ILGI).

This sequence belongs to the dicarboxylate/amino acid:cation symporter (DAACS) (TC 2.A.23) family.

It localises to the cell inner membrane. Its function is as follows. Responsible for the transport of dicarboxylates such as succinate, fumarate, and malate from the periplasm across the membrane. The polypeptide is C4-dicarboxylate transport protein (Cupriavidus taiwanensis (strain DSM 17343 / BCRC 17206 / CCUG 44338 / CIP 107171 / LMG 19424 / R1) (Ralstonia taiwanensis (strain LMG 19424))).